Reading from the N-terminus, the 339-residue chain is Phosphoribosylformylglycinamidine cyclo-ligase (339 aa).

Belongs to the AIR synthase family.

Its subcellular location is the cytoplasm. The enzyme catalyses 2-formamido-N(1)-(5-O-phospho-beta-D-ribosyl)acetamidine + ATP = 5-amino-1-(5-phospho-beta-D-ribosyl)imidazole + ADP + phosphate + H(+). The protein operates within purine metabolism; IMP biosynthesis via de novo pathway; 5-amino-1-(5-phospho-D-ribosyl)imidazole from N(2)-formyl-N(1)-(5-phospho-D-ribosyl)glycinamide: step 2/2. The protein is Phosphoribosylformylglycinamidine cyclo-ligase of Methanobrevibacter smithii (strain ATCC 35061 / DSM 861 / OCM 144 / PS).